Reading from the N-terminus, the 531-residue chain is MAPADVPASLPLGLCLLLASGFGHAGKLLVVPMDGSHWFTMQMVVEKLLPKGHEVVVVVPEVSWQLGKPLNFTVKTYSVSHTQEDLNREFKFFIDSQWKTQQESGVLPLLTSPAQGFFELLFSHCRSLFKDKKLVEYLKQSSFDAVFLDPFDVCGLTVAKYFSLPSVVFSRGIFCHYLEEGSQCPSPPSYVPRPILKLTDTMTFKERVWNLLSYMGEHAFCPSFFKTATDIASEVLQTPVTMTDLFSPVSVWLLRTDFTLELPRPVMPNVIHIGGINCHQRKPVSKEFEAYVNASGEHGIVVFSLGSMVSEIPEKKAMEIAEALGRIPQTLLWRYTGTRPSNLAKNTILVKWLPQNDLLGHPKARAFITHSGSHGIYEGICNGVPMVMMPLFGDQMDNAKRMETRGAGVTLNVLEMTADDLENALKTVINNKSYKENIMRLSSLHKDRPIEPLDLAVFWVEYVMRHKGAPHLRPAAHDLTWYQYHSLDVIGFLLAIVLTVVFIVYKSCAYGCRKCFGGKGRVKKSHKSKTH.

Positions 1 to 25 (MAPADVPASLPLGLCLLLASGFGHA) are cleaved as a signal peptide. N-linked (GlcNAc...) asparagine glycans are attached at residues asparagine 71, asparagine 293, and asparagine 431. The helical transmembrane segment at 487 to 503 (LDVIGFLLAIVLTVVFI) threads the bilayer.

It belongs to the UDP-glycosyltransferase family. As to quaternary structure, homodimer. Homooligomer. Interacts with UGT1A1, UGT1A3, UGT1A4, UGT1A6, UGT1A8, UGT1A9 and UGT1A10 to form heterodimers.

The protein resides in the endoplasmic reticulum membrane. It catalyses the reaction glucuronate acceptor + UDP-alpha-D-glucuronate = acceptor beta-D-glucuronoside + UDP + H(+). It carries out the reaction 17alpha-estradiol + UDP-alpha-D-glucuronate = 17alpha-estradiol 3-O-(beta-D-glucuronate) + UDP + H(+). The catalysed reaction is prunetin + UDP-alpha-D-glucuronate = prunetin-5-O-beta-D-glucuronide + UDP. The enzyme catalyses 5-epi-5-F2t-IsoP + UDP-alpha-D-glucuronate = 5-epi-5-F2t-IsoP-glucuronide + UDP + H(+). It catalyses the reaction (E)-ferulate + UDP-alpha-D-glucuronate = (E)-ferulic acid beta-D-glucuronate ester + UDP. It carries out the reaction candesartan + UDP-alpha-D-glucuronate = candesartan O-beta-D-glucuronoside + UDP. The catalysed reaction is SN-38 + UDP-alpha-D-glucuronate = SN-38 O-beta-D-glucuronide + UDP + H(+). The enzyme catalyses mycophenolate + UDP-alpha-D-glucuronate = mycophenolate 7-O-beta-D-glucuronide + UDP + H(+). Functionally, UDP-glucuronosyltransferase (UGT) that catalyzes phase II biotransformation reactions in which lipophilic substrates are conjugated with glucuronic acid to increase the metabolite's water solubility, thereby facilitating excretion into either the urine or bile. Essential for the elimination and detoxification of drugs, xenobiotics and endogenous compounds. Catalyzes the glucuronidation of endogenous estrogen hormone epiestradiol. Involved in the glucuronidation of F2-isoprostane (5-epi-5-F2t-IsoP). Involved in the glucuronidation of the phytochemical ferulic acid at the carboxylic acid group. Also catalyzes the glucuronidation of the isoflavones genistein, daidzein, glycitein, formononetin, biochanin A and prunetin, which are phytoestrogens with anticancer and cardiovascular properties. Involved in the glucuronidation of the AGTR1 angiotensin receptor antagonist caderastan, a drug which can inhibit the effect of angiotensin II. Involved in the biotransformation of 7-ethyl-10-hydroxycamptothecin (SN-38), the pharmacologically active metabolite of the anticancer drug irinotecan. Also metabolizes mycophenolate, an immunosuppressive agent. This is UDP-glucuronosyltransferase 1A7 from Rattus norvegicus (Rat).